The chain runs to 337 residues: Glyceraldehyde-3-phosphate dehydrogenase 1, cytosolic (337 aa).

NAD(+) is bound by residues Arg13–Ile14, Asp35, and Arg82. D-glyceraldehyde 3-phosphate contacts are provided by residues Ser153 to Thr155, Thr184, Thr213 to Gly214, and Arg236. Cys154 acts as the Nucleophile in catalysis. Residue Asn318 coordinates NAD(+).

Belongs to the glyceraldehyde-3-phosphate dehydrogenase family. In terms of assembly, homotetramer. In terms of processing, phosphorylated after gibberellin treatment.

It is found in the cytoplasm. It carries out the reaction D-glyceraldehyde 3-phosphate + phosphate + NAD(+) = (2R)-3-phospho-glyceroyl phosphate + NADH + H(+). It functions in the pathway carbohydrate degradation; glycolysis; pyruvate from D-glyceraldehyde 3-phosphate: step 1/5. Functionally, key enzyme in glycolysis that catalyzes the first step of the pathway by converting D-glyceraldehyde 3-phosphate (G3P) into 3-phospho-D-glyceroyl phosphate. Essential for the maintenance of cellular ATP levels and carbohydrate metabolism. In Oryza sativa subsp. japonica (Rice), this protein is Glyceraldehyde-3-phosphate dehydrogenase 1, cytosolic (GAPC1).